We begin with the raw amino-acid sequence, 509 residues long: Lanosterol 14-alpha demethylase (509 aa).

Residues 30–50 form a helical membrane-spanning segment; that stretch reads GNLLSMLLIACAFTLSLVYLF. Position 455 (cysteine 455) interacts with heme.

The protein belongs to the cytochrome P450 family. Requires heme as cofactor. Post-translationally, ubiquitinated by MARCHF6, leading to proteasomal degradation.

The protein resides in the endoplasmic reticulum membrane. The protein localises to the microsome membrane. The catalysed reaction is a 14alpha-methyl steroid + 3 reduced [NADPH--hemoprotein reductase] + 3 O2 = a Delta(14) steroid + formate + 3 oxidized [NADPH--hemoprotein reductase] + 4 H2O + 4 H(+). It carries out the reaction lanosterol + 3 reduced [NADPH--hemoprotein reductase] + 3 O2 = 4,4-dimethyl-5alpha-cholesta-8,14,24-trien-3beta-ol + formate + 3 oxidized [NADPH--hemoprotein reductase] + 4 H2O + 4 H(+). It catalyses the reaction 24,25-dihydrolanosterol + 3 reduced [NADPH--hemoprotein reductase] + 3 O2 = 4,4-dimethyl-8,14-cholestadien-3beta-ol + formate + 3 oxidized [NADPH--hemoprotein reductase] + 4 H2O + 4 H(+). The enzyme catalyses a 14alpha-methyl steroid + reduced [NADPH--hemoprotein reductase] + O2 = a 14alpha-hydroxymethyl steroid + oxidized [NADPH--hemoprotein reductase] + H2O + H(+). The catalysed reaction is a 14alpha-hydroxymethyl steroid + reduced [NADPH--hemoprotein reductase] + O2 = a 14alpha-formyl steroid + oxidized [NADPH--hemoprotein reductase] + 2 H2O + H(+). It carries out the reaction a 14alpha-formyl steroid + reduced [NADPH--hemoprotein reductase] + O2 = a Delta(14) steroid + formate + oxidized [NADPH--hemoprotein reductase] + H2O + 2 H(+). It catalyses the reaction lanosterol + reduced [NADPH--hemoprotein reductase] + O2 = 32-hydroxylanosterol + oxidized [NADPH--hemoprotein reductase] + H2O + H(+). The enzyme catalyses 32-hydroxylanosterol + reduced [NADPH--hemoprotein reductase] + O2 = 32-oxolanosterol + oxidized [NADPH--hemoprotein reductase] + 2 H2O + H(+). The catalysed reaction is 32-oxolanosterol + reduced [NADPH--hemoprotein reductase] + O2 = 4,4-dimethyl-5alpha-cholesta-8,14,24-trien-3beta-ol + formate + oxidized [NADPH--hemoprotein reductase] + H2O + 2 H(+). It carries out the reaction 24,25-dihydrolanosterol + reduced [NADPH--hemoprotein reductase] + O2 = 32-hydroxy-24,25-dihydrolanosterol + oxidized [NADPH--hemoprotein reductase] + H2O + H(+). It catalyses the reaction 32-hydroxy-24,25-dihydrolanosterol + reduced [NADPH--hemoprotein reductase] + O2 = 32-oxo-24,25-dihydrolanosterol + oxidized [NADPH--hemoprotein reductase] + 2 H2O + H(+). The enzyme catalyses 32-oxo-24,25-dihydrolanosterol + reduced [NADPH--hemoprotein reductase] + O2 = 4,4-dimethyl-8,14-cholestadien-3beta-ol + formate + oxidized [NADPH--hemoprotein reductase] + H2O + 2 H(+). Its pathway is steroid biosynthesis; zymosterol biosynthesis; zymosterol from lanosterol: step 1/6. With respect to regulation, inhibited by azalanstat. Inhibited by azole antifungal agents ketoconazole, itraconazole and fluconazole. In terms of biological role, sterol 14alpha-demethylase that plays a critical role in the cholesterol biosynthesis pathway, being cholesterol the major sterol component in mammalian membranes as well as a precursor for bile acid and steroid hormone synthesis. Cytochrome P450 monooxygenase that catalyzes the three-step oxidative removal of the 14alpha-methyl group (C-32) of sterols such as lanosterol (lanosta-8,24-dien-3beta-ol) and 24,25-dihydrolanosterol (DHL) in the form of formate, and converts the sterols to 4,4-dimethyl-5alpha-cholesta-8,14,24-trien-3beta-ol and 4,4-dimethyl-8,14-cholestadien-3beta-ol, respectively, which are intermediates of cholesterol biosynthesis. Can also demethylate substrates not intrinsic to mammals, such as eburicol (24-methylene-24,25-dihydrolanosterol), but at a lower rate than DHL. This chain is Lanosterol 14-alpha demethylase, found in Macaca fascicularis (Crab-eating macaque).